Here is a 245-residue protein sequence, read N- to C-terminus: Leucyl/phenylalanyl-tRNA--protein transferase (245 aa).

It belongs to the L/F-transferase family.

The protein localises to the cytoplasm. The enzyme catalyses N-terminal L-lysyl-[protein] + L-leucyl-tRNA(Leu) = N-terminal L-leucyl-L-lysyl-[protein] + tRNA(Leu) + H(+). It carries out the reaction N-terminal L-arginyl-[protein] + L-leucyl-tRNA(Leu) = N-terminal L-leucyl-L-arginyl-[protein] + tRNA(Leu) + H(+). The catalysed reaction is L-phenylalanyl-tRNA(Phe) + an N-terminal L-alpha-aminoacyl-[protein] = an N-terminal L-phenylalanyl-L-alpha-aminoacyl-[protein] + tRNA(Phe). Functionally, functions in the N-end rule pathway of protein degradation where it conjugates Leu, Phe and, less efficiently, Met from aminoacyl-tRNAs to the N-termini of proteins containing an N-terminal arginine or lysine. This Paraburkholderia xenovorans (strain LB400) protein is Leucyl/phenylalanyl-tRNA--protein transferase.